Here is a 381-residue protein sequence, read N- to C-terminus: cAMP-dependent protein kinase type I-beta regulatory subunit (381 aa).

The dimerization and phosphorylation stretch occupies residues 1–136 (MASPSCFHSE…ALAKAISKNV (136 aa)). At S3 the chain carries Phosphoserine. Position 21 is a 3'-nitrotyrosine (Y21). A disordered region spans residues 66-88 (LARQKSNSQCDSHDEEISPTPPN). S77 and S83 each carry phosphoserine. Position 85 is a phosphothreonine (T85). Positions 96-100 (RRGGV) match the Pseudophosphorylation motif motif. At R97 the chain carries Omega-N-methylarginine. 3',5'-cyclic AMP contacts are provided by residues 137–254 (LFSH…SKVS), E202, R211, 255–381 (ILES…SLTV), E326, and R335.

This sequence belongs to the cAMP-dependent kinase regulatory chain family. The inactive holoenzyme is composed of two regulatory chains and two catalytic chains. Activation by cAMP releases the two active catalytic monomers and the regulatory dimer. Interacts with PRKX; regulates this cAMP-dependent protein kinase. Interacts with smAKAP; this interaction may target PRKAR1B to the plasma membrane. In terms of processing, the pseudophosphorylation site binds to the substrate-binding region of the catalytic chain, resulting in the inhibition of its activity. In terms of tissue distribution, four types of regulatory chains are found: I-alpha, I-beta, II-alpha, and II-beta. Their expression varies among tissues and is in some cases constitutive and in others inducible.

The protein resides in the cell membrane. Regulatory subunit of the cAMP-dependent protein kinases involved in cAMP signaling in cells. In Mus musculus (Mouse), this protein is cAMP-dependent protein kinase type I-beta regulatory subunit (Prkar1b).